The chain runs to 98 residues: Small ribosomal subunit protein bS6 (98 aa).

It belongs to the bacterial ribosomal protein bS6 family.

Binds together with bS18 to 16S ribosomal RNA. The chain is Small ribosomal subunit protein bS6 from Moorella thermoacetica (strain ATCC 39073 / JCM 9320).